A 308-amino-acid chain; its full sequence is UDP-N-acetylenolpyruvoylglucosamine reductase 2 (308 aa).

The FAD-binding PCMH-type domain maps to 31–197; it reads RIGGPADYLV…AEVVMALRPA (167 aa). The active site involves R176. The Proton donor role is filled by S226. E296 is an active-site residue.

This sequence belongs to the MurB family. FAD serves as cofactor.

The protein resides in the cytoplasm. It catalyses the reaction UDP-N-acetyl-alpha-D-muramate + NADP(+) = UDP-N-acetyl-3-O-(1-carboxyvinyl)-alpha-D-glucosamine + NADPH + H(+). It functions in the pathway cell wall biogenesis; peptidoglycan biosynthesis. Its function is as follows. Cell wall formation. The sequence is that of UDP-N-acetylenolpyruvoylglucosamine reductase 2 from Symbiobacterium thermophilum (strain DSM 24528 / JCM 14929 / IAM 14863 / T).